The primary structure comprises 492 residues: Stage IV sporulation protein A (492 aa).

Residues 24-31 (GAVRTGKS) carry the Walker A motif; involved in ATP-binding and hydrolysis motif. 24–31 (GAVRTGKS) provides a ligand contact to ATP.

As to quaternary structure, polymerizes to self-assemble into static filaments. ATP hydrolysis is required by every subunit for incorporation into the growing polymer by inducing a conformational change that drives polymerization of a nucleotide-free filament. Polymerization requires a critical concentration of the protein and only occurs after it is localized to the surface of the developing spore. Interacts (via extreme C-terminus Gly-486) with SpoVM (via Ile-6). Interacts (via full-length) with SpoVID (via C-terminus 499-575 AA). Interacts with SafA. In terms of processing, seems to be cleaved by the YabG protease.

The protein resides in the cytoplasm. The catalysed reaction is ATP + H2O = ADP + phosphate + H(+). Functionally, ATPase. Has a role at an early stage in the morphogenesis of the spore coat outer layers. Its ATP hydrolysis is required for proper assembly of the spore coat. Forms a basement layer around the outside surface of the forespore and self-assembles irreversibly into higher order structures by binding and hydrolyzing ATP thus creating a durable and stable platform upon which thereafter morphogenesis of the coat can take place. Required for proper localization of spore coat protein CotE and sporulation-specific proteins including SpoVM. This is Stage IV sporulation protein A (spoIVA) from Bacillus subtilis (strain 168).